Consider the following 226-residue polypeptide: Gap junction beta-2 protein (226 aa).

Over 1–20 (MDWGGLHTILGGVNKHSTSI) the chain is Cytoplasmic. The helical transmembrane segment at 21–40 (GKIWLTVLFIFRIMILVVAA) threads the bilayer. Residues 41-75 (KEVWGDEQADFVCNTLQPGCKNVCYDHYFPISHIR) are Extracellular-facing. Cystine bridges form between Cys-53-Cys-180, Cys-60-Cys-174, and Cys-64-Cys-169. Residues 76–98 (LWALQLIFVSTPALLVAMHVAYY) traverse the membrane as a helical segment. The Cytoplasmic segment spans residues 99-131 (RHEKKRKFIRGEIKTEFKDIEEIKKQKVRIEGS). Residues 132–154 (LWWTYTGSIFFRVIFEAAFMYVF) traverse the membrane as a helical segment. At 155–192 (YVMYDGFAMQRLVKCNAWPCPNTVDCFVSRPTEKTVFT) the chain is on the extracellular side. A helical transmembrane segment spans residues 193–215 (VFMIAVSGICILLNVTELCYLLI). At 216–226 (RFCSGKSKKPV) the chain is on the cytoplasmic side.

It belongs to the connexin family. In terms of assembly, a connexon is composed of a hexamer of connexins. Interacts with CNST.

It is found in the cell membrane. Its subcellular location is the cell junction. It localises to the gap junction. Its function is as follows. One gap junction consists of a cluster of closely packed pairs of transmembrane channels, the connexons, through which materials of low MW diffuse from one cell to a neighboring cell. The sequence is that of Gap junction beta-2 protein (GJB2) from Bos taurus (Bovine).